A 154-amino-acid chain; its full sequence is Putative pre-16S rRNA nuclease (154 aa).

This sequence belongs to the YqgF nuclease family.

It localises to the cytoplasm. Could be a nuclease involved in processing of the 5'-end of pre-16S rRNA. This is Putative pre-16S rRNA nuclease from Gluconacetobacter diazotrophicus (strain ATCC 49037 / DSM 5601 / CCUG 37298 / CIP 103539 / LMG 7603 / PAl5).